Reading from the N-terminus, the 207-residue chain is Outer-membrane lipoprotein LolB (207 aa).

Residues 1–21 (MPTKTVRCLRLLPLASLLLAA) form the signal peptide. Residue cysteine 22 is the site of N-palmitoyl cysteine attachment. Residue cysteine 22 is the site of S-diacylglycerol cysteine attachment.

It belongs to the LolB family. As to quaternary structure, monomer.

The protein resides in the cell outer membrane. Its function is as follows. Plays a critical role in the incorporation of lipoproteins in the outer membrane after they are released by the LolA protein. This is Outer-membrane lipoprotein LolB from Pectobacterium atrosepticum (strain SCRI 1043 / ATCC BAA-672) (Erwinia carotovora subsp. atroseptica).